We begin with the raw amino-acid sequence, 459 residues long: Hepatocyte nuclear factor 3-beta (459 aa).

The transactivation domain 1 stretch occupies residues 14–93 (DWSSYYAEPE…AGAMAGMSGS (80 aa)). The Nuclear localization signal signature appears at 106 to 113 (LSPSLSPL). At T156 the chain carries Phosphothreonine. A DNA-binding region (fork-head) is located at residues 159-252 (KPPYSYISLI…FENGCYLRRQ (94 aa)). S212 is modified (phosphoserine). Positions 268-281 (GAASSGGKKTAPGS) are enriched in low complexity. The tract at residues 268 to 366 (GAASSGGKKT…PGLPPEAHLK (99 aa)) is disordered. S284 is subject to Phosphoserine. A compositionally biased stretch (polar residues) spans 295–311 (ASETPAGTESPHSSASP). The residue at position 302 (T302) is a Phosphothreonine. A phosphoserine mark is found at S304, S307, S308, and S310. Low complexity predominate over residues 340-353 (PGQQQQAAAHLLGP). The tract at residues 362–459 (EAHLKPEHHY…VYSRPIMNSS (98 aa)) is transactivation domain 2. Residues S438 and S459 each carry the phosphoserine modification.

Binds DNA as a monomer. Binds TLE1. Interacts with FOXA1 and FOXA3. Interacts with PRKDC. Interacts with AKT1. Interacts with TET1; this interaction may recruit TET1 to specific genomic loci to mediate their demethylation. Phosphorylation on Thr-156 abolishes binding to target promoters and subsequent transcription activation upon insulin stimulation. As to expression, restricted mainly to endoderm-derived tissues (lung, liver, stomach, and small intestine). Expressed in epididymis with region-specific expression pattern: no expression is observed in initial segment, low expression in proximal caput, gradiently higher levels of expression in middle and distal caput and highest level in corpus and cauda (at protein level).

It is found in the nucleus. The protein resides in the cytoplasm. Its function is as follows. Transcription factor that is involved in embryonic development, establishment of tissue-specific gene expression and regulation of gene expression in differentiated tissues. Is thought to act as a 'pioneer' factor opening the compacted chromatin for other proteins through interactions with nucleosomal core histones and thereby replacing linker histones at target enhancer and/or promoter sites. Binds DNA with the consensus sequence 5'-[AC]A[AT]T[AG]TT[GT][AG][CT]T[CT]-3'. In embryonic development is required for notochord formation. Involved in the development of multiple endoderm-derived organ systems such as the liver, pancreas and lungs; Foxa1 and Foxa2 seem to have at least in part redundant roles. FOXA1 and FOXA2 are essential for hepatic specification. FOXA1 and FOXA2 are required for morphogenesis and cell differentiation during formation of the lung. FOXA1 and FOXA2 are involved in bile duct formation; they positively regulate the binding glucocorticoid receptor/NR3C1 to the IL6 promoter. FOXA1 and FOXA2 regulate multiple phases of midbrain dopaminergic neuron development; they regulate expression of NEUROG2 at the beginning of mDA neurogenesis and of NR4A2 and EN1 in immature mDA neurons. Modulates the transcriptional activity of nuclear hormone receptors; inhibits AR-mediated transcription from the LCN5 promoter. Binds to fibrinogen beta promoter and is involved in IL6-induced fibrinogen beta transcriptional activation. Originally described as a transcription activator for a number of liver genes such as AFP, albumin, tyrosine aminotransferase, PEPCK, etc. Interacts with the cis-acting regulatory regions of these genes. Involved in glucose homeostasis; regulates the expression of genes important for glucose sensing in pancreatic beta-cells and glucose homeostasis. In pancreatic beta cells activates transcription of potassium channel subunits KCNJ11 and ABCC8. Involved in regulation of fat metabolism; activates transcriptional programs of lipid metabolism and ketogenesis at low insulin state. Involved in transcriptional regulation of MUC2 in the intestine. This chain is Hepatocyte nuclear factor 3-beta (Foxa2), found in Mus musculus (Mouse).